Consider the following 289-residue polypeptide: Ribosomal protein L11 methyltransferase (289 aa).

S-adenosyl-L-methionine is bound by residues Thr134, Gly155, Asp177, and Asn225.

The protein belongs to the methyltransferase superfamily. PrmA family.

It localises to the cytoplasm. It carries out the reaction L-lysyl-[protein] + 3 S-adenosyl-L-methionine = N(6),N(6),N(6)-trimethyl-L-lysyl-[protein] + 3 S-adenosyl-L-homocysteine + 3 H(+). Its function is as follows. Methylates ribosomal protein L11. This Parasynechococcus marenigrum (strain WH8102) protein is Ribosomal protein L11 methyltransferase.